The sequence spans 341 residues: Thiamine-phosphate synthase (341 aa).

The segment at 1–123 (MAVVEEQVVL…AAAAKEWRYR (123 aa)) is unknown. The tract at residues 61 to 80 (AARDTPHDPGTGLEHPDEGV) is disordered. Positions 124-341 (VYTLESTATG…AWFLERLNRG (218 aa)) are thiamine-phosphate synthase. Residues 171 to 175 (QLREK) and asparagine 203 each bind 4-amino-2-methyl-5-(diphosphooxymethyl)pyrimidine. Residues aspartate 204 and aspartate 223 each contribute to the Mg(2+) site. Serine 242 serves as a coordination point for 4-amino-2-methyl-5-(diphosphooxymethyl)pyrimidine. 2-[(2R,5Z)-2-carboxy-4-methylthiazol-5(2H)-ylidene]ethyl phosphate is bound at residue 268-270 (TPT). Residue lysine 271 participates in 4-amino-2-methyl-5-(diphosphooxymethyl)pyrimidine binding. Glycine 298 lines the 2-[(2R,5Z)-2-carboxy-4-methylthiazol-5(2H)-ylidene]ethyl phosphate pocket.

The protein belongs to the thiamine-phosphate synthase family. It depends on Mg(2+) as a cofactor.

The enzyme catalyses 2-[(2R,5Z)-2-carboxy-4-methylthiazol-5(2H)-ylidene]ethyl phosphate + 4-amino-2-methyl-5-(diphosphooxymethyl)pyrimidine + 2 H(+) = thiamine phosphate + CO2 + diphosphate. It carries out the reaction 2-(2-carboxy-4-methylthiazol-5-yl)ethyl phosphate + 4-amino-2-methyl-5-(diphosphooxymethyl)pyrimidine + 2 H(+) = thiamine phosphate + CO2 + diphosphate. It catalyses the reaction 4-methyl-5-(2-phosphooxyethyl)-thiazole + 4-amino-2-methyl-5-(diphosphooxymethyl)pyrimidine + H(+) = thiamine phosphate + diphosphate. The protein operates within cofactor biosynthesis; thiamine diphosphate biosynthesis; thiamine phosphate from 4-amino-2-methyl-5-diphosphomethylpyrimidine and 4-methyl-5-(2-phosphoethyl)-thiazole: step 1/1. Its function is as follows. Condenses 4-methyl-5-(beta-hydroxyethyl)thiazole monophosphate (THZ-P) and 2-methyl-4-amino-5-hydroxymethyl pyrimidine pyrophosphate (HMP-PP) to form thiamine monophosphate (TMP). The polypeptide is Thiamine-phosphate synthase (Gloeobacter violaceus (strain ATCC 29082 / PCC 7421)).